A 550-amino-acid chain; its full sequence is Hydroxylamine reductase (550 aa).

Residues C7, C10, C19, and C25 each coordinate [4Fe-4S] cluster. 8 residues coordinate hybrid [4Fe-2O-2S] cluster: H244, E268, C312, C405, C433, C458, E493, and K495. C405 is subject to Cysteine persulfide.

It belongs to the HCP family. The cofactor is [4Fe-4S] cluster. Hybrid [4Fe-2O-2S] cluster serves as cofactor.

The protein localises to the cytoplasm. The enzyme catalyses A + NH4(+) + H2O = hydroxylamine + AH2 + H(+). In terms of biological role, catalyzes the reduction of hydroxylamine to form NH(3) and H(2)O. In Porphyromonas gingivalis (strain ATCC BAA-308 / W83), this protein is Hydroxylamine reductase.